Consider the following 834-residue polypeptide: Periplasmic nitrate reductase (834 aa).

The segment at residues 1–31 (MTGELTRREMLKAHAAGIAAATAGIALPAAA) is a signal peptide (tat-type signal). Residues 43-99 (ITWSKAPCRFCGTGCGVMVGVKEGQVVATHGDMQAEVNRGLNCIKGYFLSKIMYGTD) enclose the 4Fe-4S Mo/W bis-MGD-type domain. [4Fe-4S] cluster-binding residues include cysteine 50, cysteine 53, cysteine 57, and cysteine 85. Residues lysine 87, glutamine 154, asparagine 179, cysteine 183, 216–223 (WGSNMAEM), 247–251 (STFTH), 266–268 (GTD), methionine 377, glutamine 381, asparagine 487, 513–514 (SD), lysine 536, aspartate 563, and 723–732 (TGRVLEHWHS) each bind Mo-bis(molybdopterin guanine dinucleotide). Position 799 (tryptophan 799) interacts with substrate. Residues asparagine 807 and lysine 824 each coordinate Mo-bis(molybdopterin guanine dinucleotide).

The protein belongs to the prokaryotic molybdopterin-containing oxidoreductase family. NasA/NapA/NarB subfamily. As to quaternary structure, component of the periplasmic nitrate reductase NapAB complex composed of NapA and NapB. It depends on [4Fe-4S] cluster as a cofactor. Requires Mo-bis(molybdopterin guanine dinucleotide) as cofactor. Post-translationally, predicted to be exported by the Tat system. The position of the signal peptide cleavage has not been experimentally proven.

The protein localises to the periplasm. The enzyme catalyses 2 Fe(II)-[cytochrome] + nitrate + 2 H(+) = 2 Fe(III)-[cytochrome] + nitrite + H2O. In terms of biological role, catalytic subunit of the periplasmic nitrate reductase complex NapAB. Receives electrons from NapB and catalyzes the reduction of nitrate to nitrite. The chain is Periplasmic nitrate reductase from Rhizobium meliloti (strain 1021) (Ensifer meliloti).